Consider the following 452-residue polypeptide: Pup--protein ligase (452 aa).

Residue Glu-9 coordinates Mg(2+). Residue Arg-53 coordinates ATP. Tyr-55 lines the Mg(2+) pocket. Catalysis depends on Asp-57, which acts as the Proton acceptor. A Mg(2+)-binding site is contributed by Glu-63. Residues Thr-66 and Trp-419 each contribute to the ATP site.

The protein belongs to the Pup ligase/Pup deamidase family. Pup-conjugating enzyme subfamily.

The enzyme catalyses ATP + [prokaryotic ubiquitin-like protein]-L-glutamate + [protein]-L-lysine = ADP + phosphate + N(6)-([prokaryotic ubiquitin-like protein]-gamma-L-glutamyl)-[protein]-L-lysine.. It functions in the pathway protein degradation; proteasomal Pup-dependent pathway. The protein operates within protein modification; protein pupylation. Catalyzes the covalent attachment of the prokaryotic ubiquitin-like protein modifier Pup to the proteasomal substrate proteins, thereby targeting them for proteasomal degradation. This tagging system is termed pupylation. The ligation reaction involves the side-chain carboxylate of the C-terminal glutamate of Pup and the side-chain amino group of a substrate lysine. This is Pup--protein ligase from Actinosynnema mirum (strain ATCC 29888 / DSM 43827 / JCM 3225 / NBRC 14064 / NCIMB 13271 / NRRL B-12336 / IMRU 3971 / 101).